The following is a 263-amino-acid chain: Mediator of RNA polymerase II transcription subunit 4 (263 aa).

Residues 61-111 (LQLAAEQAGIEKNMDALREQVRKQDEEINQLQRQLKEAEQILATSIFQARQ) are a coiled coil. Disordered regions lie at residues 209–228 (APNQ…MGAG) and 235–263 (DTRA…SDSQ). The segment covering 251–263 (STESSSSSSSDSQ) has biased composition (low complexity).

It belongs to the Mediator complex subunit 4 family. Component of the Mediator complex.

The protein resides in the nucleus. In terms of biological role, component of the Mediator complex, a coactivator involved in the regulated transcription of nearly all RNA polymerase II-dependent genes. Mediator functions as a bridge to convey information from gene-specific regulatory proteins to the basal RNA polymerase II transcription machinery. Mediator is recruited to promoters by direct interactions with regulatory proteins and serves as a scaffold for the assembly of a functional preinitiation complex with RNA polymerase II and the general transcription factors. The sequence is that of Mediator of RNA polymerase II transcription subunit 4 (MED4) from Anopheles gambiae (African malaria mosquito).